The chain runs to 309 residues: uncharacterized protein (309 aa).

Positions 9–55 (NFLYNIANKDGFKGYKECRTSAYKNVFDDSSTKSTSKFHLGISDTKN) constitute an RPE1 insert domain. A helical membrane pass occupies residues 62-82 (IIGLILIIFAGVLFYAYILQH).

It belongs to the LicD transferase family.

It localises to the membrane. This is an uncharacterized protein from Rickettsia typhi (strain ATCC VR-144 / Wilmington).